The primary structure comprises 448 residues: Chaperone SurA (448 aa).

Positions 1–27 (MKKTLRFAAVASGLVASLITVAPSASA) are cleaved as a signal peptide. PpiC domains follow at residues 185 to 288 (QQDL…RLVE) and 301 to 399 (IVQT…QVLG).

It is found in the periplasm. It carries out the reaction [protein]-peptidylproline (omega=180) = [protein]-peptidylproline (omega=0). Functionally, chaperone involved in the correct folding and assembly of outer membrane proteins. Recognizes specific patterns of aromatic residues and the orientation of their side chains, which are found more frequently in integral outer membrane proteins. May act in both early periplasmic and late outer membrane-associated steps of protein maturation. This Burkholderia pseudomallei (strain 1710b) protein is Chaperone SurA.